The sequence spans 499 residues: Pyruvate kinase 2 (499 aa).

A substrate-binding site is contributed by Arg50. K(+)-binding residues include Asn52, Ser54, Asp84, and Thr85. 52–55 (NFSH) is an ATP binding site. Arg91 lines the ATP pocket. Glu241 is a Mg(2+) binding site. Gly264, Asp265, and Thr297 together coordinate substrate. Asp265 provides a ligand contact to Mg(2+).

It belongs to the pyruvate kinase family. Homotetramer. The cofactor is Mg(2+). K(+) serves as cofactor.

The catalysed reaction is pyruvate + ATP = phosphoenolpyruvate + ADP + H(+). It participates in carbohydrate degradation; glycolysis; pyruvate from D-glyceraldehyde 3-phosphate: step 5/5. Its activity is regulated as follows. Activated by fructose 2,6-bisphosphate, activated by the effector in a cooperative manner. This Trypanosoma brucei brucei protein is Pyruvate kinase 2 (PYK2).